A 129-amino-acid polypeptide reads, in one-letter code: Histone H2B.1 (129 aa).

A compositionally biased stretch (basic and acidic residues) spans 1–17 (MSAEKKPASKAPAEKKP). A disordered region spans residues 1–35 (MSAEKKPASKAPAEKKPAAKKTAPSADGKKRTKAR). Residues Lys-5 and Lys-6 each carry the N6-acetyllysine; alternate modification. Glycyl lysine isopeptide (Lys-Gly) (interchain with G-Cter in SUMO); alternate cross-links involve residues Lys-5 and Lys-6. Ser-9 is subject to Phosphoserine. An N6-acetyllysine modification is found at Lys-10. An N6-acetyllysine; alternate modification is found at Lys-15. Lys-15 is covalently cross-linked (Glycyl lysine isopeptide (Lys-Gly) (interchain with G-Cter in SUMO); alternate). Lys-16 participates in a covalent cross-link: Glycyl lysine isopeptide (Lys-Gly) (interchain with G-Cter in SUMO). Lys-122 participates in a covalent cross-link: Glycyl lysine isopeptide (Lys-Gly) (interchain with G-Cter in ubiquitin).

This sequence belongs to the histone H2B family. As to quaternary structure, the nucleosome is a histone octamer containing two molecules each of H2A, H2B, H3 and H4 assembled in one H3-H4 heterotetramer and two H2A-H2B heterodimers. The octamer wraps approximately 147 bp of DNA. Monoubiquitinated by the UBC2-BRE1 complex to form H2BK123ub1. H2BK123ub1 gives a specific tag for epigenetic transcriptional activation and is also prerequisite for H3K4me and H3K79me formation. H2BK123ub1 also modulates the formation of double-strand breaks during meiosis and is a prerequisite for DNA-damage checkpoint activation. In terms of processing, phosphorylated by STE20 to form H2BS10ph during progression through meiotic prophase. May be correlated with chromosome condensation. Post-translationally, acetylated by GCN5 to form H2BK11ac and H2BK16ac. H2BK16ac can also be formed by ESA1. Acetylation of N-terminal lysines and particularly formation of H2BK11acK16ac has a positive effect on transcription. Sumoylation to form H2BK6su or H2BK7su, and probably also H2BK16su or H2BK17su, occurs preferentially near the telomeres and represses gene transcription.

It localises to the nucleus. It is found in the chromosome. Core component of nucleosome. Nucleosomes wrap and compact DNA into chromatin, limiting DNA accessibility to the cellular machineries which require DNA as a template. Histones thereby play a central role in transcription regulation, DNA repair, DNA replication and chromosomal stability. DNA accessibility is regulated via a complex set of post-translational modifications of histones, also called histone code, and nucleosome remodeling. In Candida glabrata (strain ATCC 2001 / BCRC 20586 / JCM 3761 / NBRC 0622 / NRRL Y-65 / CBS 138) (Yeast), this protein is Histone H2B.1 (HTB1).